The chain runs to 205 residues: 2-dehydro-3-deoxy-6-phosphogalactonate aldolase (205 aa).

Arginine 14 contributes to the 2-dehydro-3-deoxy-6-phospho-D-galactonate binding site. Glutamate 37 serves as the catalytic Proton donor/acceptor. Residues threonine 66, lysine 126, glycine 156, glycine 176, and serine 177 each coordinate 2-dehydro-3-deoxy-6-phospho-D-galactonate. The active-site Schiff-base intermediate with substrate is the lysine 126.

Belongs to the KHG/KDPG aldolase family. In terms of assembly, homotrimer.

The catalysed reaction is 2-dehydro-3-deoxy-6-phospho-D-galactonate = D-glyceraldehyde 3-phosphate + pyruvate. It participates in carbohydrate acid metabolism; D-galactonate degradation; D-glyceraldehyde 3-phosphate and pyruvate from D-galactonate: step 3/3. Its function is as follows. Involved in the degradation of galactose via the DeLey-Doudoroff pathway. Catalyzes the reversible, stereospecific retro-aldol cleavage of 2-keto-3-deoxy-6-phosphogalactonate (KDPGal) to pyruvate and D-glyceraldehyde-3-phosphate. In the synthetic direction, it catalyzes the addition of pyruvate to electrophilic aldehydes with re-facial selectivity. It can use a limited number of aldehyde substrates, including D-glyceraldehyde-3-phosphate (natural substrate), D-glyceraldehyde, glycolaldehyde, 2-pyridinecarboxaldehyde, D-ribose, D-erythrose and D-threose. It efficiently catalyzes aldol addition only using pyruvate as the nucleophilic component and accepts both stereochemical configurations at C2 of the electrophile. The polypeptide is 2-dehydro-3-deoxy-6-phosphogalactonate aldolase (dgoA) (Escherichia coli (strain K12)).